Reading from the N-terminus, the 152-residue chain is Large ribosomal subunit protein bL9 (152 aa).

The protein belongs to the bacterial ribosomal protein bL9 family.

In terms of biological role, binds to the 23S rRNA. This chain is Large ribosomal subunit protein bL9, found in Synechococcus sp. (strain RCC307).